We begin with the raw amino-acid sequence, 257 residues long: Short chain dehydrogenase ausX (257 aa).

Isoleucine 11, aspartate 57, arginine 119, tyrosine 151, lysine 155, and valine 184 together coordinate NADP(+). Tyrosine 151 serves as the catalytic Proton acceptor. The active-site Lowers pKa of active site Tyr is lysine 155.

This sequence belongs to the short-chain dehydrogenases/reductases (SDR) family.

The protein operates within secondary metabolite biosynthesis; terpenoid biosynthesis. Functionally, short chain dehydrogenase; part of the gene cluster that mediates the biosynthesis of calidodehydroaustin, a fungal meroterpenoid. The first step of the pathway is the synthesis of 3,5-dimethylorsellinic acid by the polyketide synthase ausA. 3,5-dimethylorsellinic acid is then prenylated by the polyprenyl transferase ausN. Further epoxidation by the FAD-dependent monooxygenase ausM and cyclization by the probable terpene cyclase ausL lead to the formation of protoaustinoid A. Protoaustinoid A is then oxidized to spiro-lactone preaustinoid A3 by the combined action of the FAD-binding monooxygenases ausB and ausC, and the dioxygenase ausE. Acid-catalyzed keto-rearrangement and ring contraction of the tetraketide portion of preaustinoid A3 by ausJ lead to the formation of preaustinoid A4. The aldo-keto reductase ausK, with the help of ausH, is involved in the next step by transforming preaustinoid A4 into isoaustinone which is in turn hydroxylated by the P450 monooxygenase ausI to form austinolide. The cytochrome P450 monooxygenase ausG modifies austinolide to austinol. Austinol is further acetylated to austin by the O-acetyltransferase ausP, which spontaneously changes to dehydroaustin. The cytochrome P450 monooxygenase ausR then converts dehydroaustin is into 7-dehydrodehydroaustin. The hydroxylation catalyzed by ausR permits the O-acetyltransferase ausQ to add an additional acetyl group to the molecule, leading to the formation of acetoxydehydroaustin. The short chain dehydrogenase ausT catalyzes the reduction of the double bond present between carbon atoms 1 and 2 to convert 7-dehydrodehydroaustin into 1,2-dihydro-7-hydroxydehydroaustin. AusQ catalyzes not only an acetylation reaction but also the addition of the PKS ausV diketide product to 1,2-dihydro-7-hydroxydehydroaustin, forming precalidodehydroaustin. Finally, the iron/alpha-ketoglutarate-dependent dioxygenase converts precalidodehydroaustin into calidodehydroaustin. The protein is Short chain dehydrogenase ausX of Aspergillus calidoustus.